A 100-amino-acid chain; its full sequence is ESAT-6-like protein EsxB (100 aa).

The protein belongs to the WXG100 family. CFP-10 subfamily. As to quaternary structure, forms a tight 1:1 complex with EsxA.

The protein resides in the secreted. Its function is as follows. A secreted protein that might play a role in virulence. Might serve as a chaperone to prevent uncontrolled membrane lysis by its partner EsxA. In Mycobacterium leprae (strain TN), this protein is ESAT-6-like protein EsxB (esxB).